A 268-amino-acid chain; its full sequence is Zinc transporter ZupT (268 aa).

The next 5 helical transmembrane spans lie at 6-26 (LAFLLTLFAGLATGVGSLIAF), 37-57 (SFALGLSAGVMIYVSMVDIFF), 70-90 (TQGYWLTVIAFFGGMLLIGFI), 125-145 (GLFTALALAIHNFPEGIATFV), and 152-172 (SIGLAIAIAVAIHNIPEGIAV). 2 residues coordinate Fe(2+): Asn136 and Glu139. Zn(2+)-binding residues include Glu139 and His164. Asn165, Glu168, and Glu197 together coordinate Fe(2+). A Zn(2+)-binding site is contributed by Glu168. The next 2 helical transmembrane spans lie at 201-221 (AIVAILILMPFLNDLMFGIIF) and 248-268 (MSMYGVISGMALMAVSLLLLA).

This sequence belongs to the ZIP transporter (TC 2.A.5) family. ZupT subfamily.

Its subcellular location is the cell membrane. It carries out the reaction Zn(2+)(in) = Zn(2+)(out). Its function is as follows. Mediates zinc uptake. May also transport other divalent cations. The protein is Zinc transporter ZupT of Oceanobacillus iheyensis (strain DSM 14371 / CIP 107618 / JCM 11309 / KCTC 3954 / HTE831).